The sequence spans 379 residues: Homoserine O-succinyltransferase (379 aa).

In terms of domain architecture, AB hydrolase-1 spans 51-360; the sequence is NAVLICHALS…DSPYGHDAFL (310 aa). Residue Ser-157 is the Nucleophile of the active site. Arg-227 is a binding site for substrate. Residues Asp-323 and His-356 contribute to the active site. Asp-357 is a binding site for substrate.

Belongs to the AB hydrolase superfamily. MetX family. As to quaternary structure, homodimer.

The protein localises to the cytoplasm. It carries out the reaction L-homoserine + succinyl-CoA = O-succinyl-L-homoserine + CoA. The protein operates within amino-acid biosynthesis; L-methionine biosynthesis via de novo pathway; O-succinyl-L-homoserine from L-homoserine: step 1/1. In terms of biological role, transfers a succinyl group from succinyl-CoA to L-homoserine, forming succinyl-L-homoserine. The protein is Homoserine O-succinyltransferase of Pseudomonas putida (strain ATCC 700007 / DSM 6899 / JCM 31910 / BCRC 17059 / LMG 24140 / F1).